The primary structure comprises 209 residues: Octanoyltransferase (209 aa).

A BPL/LPL catalytic domain is found at G29 to E209. Substrate-binding positions include R68–H75, A141–G143, and G154–A156. The Acyl-thioester intermediate role is filled by C172.

This sequence belongs to the LipB family.

The protein localises to the cytoplasm. It catalyses the reaction octanoyl-[ACP] + L-lysyl-[protein] = N(6)-octanoyl-L-lysyl-[protein] + holo-[ACP] + H(+). The protein operates within protein modification; protein lipoylation via endogenous pathway; protein N(6)-(lipoyl)lysine from octanoyl-[acyl-carrier-protein]: step 1/2. Catalyzes the transfer of endogenously produced octanoic acid from octanoyl-acyl-carrier-protein onto the lipoyl domains of lipoate-dependent enzymes. Lipoyl-ACP can also act as a substrate although octanoyl-ACP is likely to be the physiological substrate. This Neorickettsia sennetsu (strain ATCC VR-367 / Miyayama) (Ehrlichia sennetsu) protein is Octanoyltransferase.